The sequence spans 345 residues: Green-sensitive opsin (345 aa).

Residues 1–37 (MENGTEGKNFYIPMNNRTGLVRSPYEYPQYYLADPWQ) lie on the Extracellular side of the membrane. N-linked (GlcNAc...) asparagine glycosylation is found at asparagine 3 and asparagine 16. The chain crosses the membrane as a helical span at residues 38 to 62 (FKLLGIYMFFLILTGFPINALTLVV). The Cytoplasmic portion of the chain corresponds to 63 to 74 (TAQNKKLRQPLN). The chain crosses the membrane as a helical span at residues 75–100 (FILVNLAVAGLIMVCFGFTVCIYSCM). Over 101–114 (VGYFSLGPLGCTIE) the chain is Extracellular. A disulfide bridge links cysteine 111 with cysteine 188. The helical transmembrane segment at 115–134 (GFMATLGGQVSLWSLVVLAI) threads the bilayer. Topologically, residues 135–153 (ERYIVVCKPMGSFKFTATH) are cytoplasmic. Residues 154–177 (SAAGCAFTWIMASSCAVPPLVGWS) traverse the membrane as a helical segment. Residues 178–203 (RYIPEGIQVSCGPDYYTLAPGFNNES) are Extracellular-facing. Asparagine 201 carries N-linked (GlcNAc...) asparagine glycosylation. A helical transmembrane segment spans residues 204-231 (FVMYMFSCHFCVPVFTIFFTYGSLVMTV). At 232 to 253 (KAAAAQQQDSASTQKAEKEVTR) the chain is on the cytoplasmic side. Residues 254–277 (MCFLMVLGFLLAWVPYASYAAWIF) form a helical membrane-spanning segment. Residues 278–285 (FNRGAAFS) are Extracellular-facing. A helical transmembrane segment spans residues 286–310 (AMSMAIPSFFSKSSALFNPIIYILL). Residue lysine 297 is modified to N6-(retinylidene)lysine. The Cytoplasmic segment spans residues 311 to 345 (NKQFRNCMLATIGMGGMVEDETSVSTSKTEVSTAA).

It belongs to the G-protein coupled receptor 1 family. Opsin subfamily. Post-translationally, phosphorylated on some or all of the serine and threonine residues present in the C-terminal region. As to expression, the color pigments are found in the cone photoreceptor cells.

It localises to the membrane. Visual pigments are the light-absorbing molecules that mediate vision. They consist of an apoprotein, opsin, covalently linked to cis-retinal. The protein is Green-sensitive opsin of Oryzias latipes (Japanese rice fish).